The primary structure comprises 477 residues: UDP-N-acetylmuramate--L-alanine ligase (477 aa).

Residue 112–118 (GTHGKTT) participates in ATP binding.

This sequence belongs to the MurCDEF family.

The protein resides in the cytoplasm. The catalysed reaction is UDP-N-acetyl-alpha-D-muramate + L-alanine + ATP = UDP-N-acetyl-alpha-D-muramoyl-L-alanine + ADP + phosphate + H(+). The protein operates within cell wall biogenesis; peptidoglycan biosynthesis. Its function is as follows. Cell wall formation. The sequence is that of UDP-N-acetylmuramate--L-alanine ligase from Cupriavidus necator (strain ATCC 17699 / DSM 428 / KCTC 22496 / NCIMB 10442 / H16 / Stanier 337) (Ralstonia eutropha).